Here is a 320-residue protein sequence, read N- to C-terminus: MVGYDPKPDGRNNTKFQVAVAGSVSGLVTRALISPFDVIKIRFQLQHERLSRSDPNAKYHGILQASRQILQEEGPTAFWKGHIPAQILSIGYGAVQFLSFEMLTELVHRGSVYDAREFSVHFVCGGLAACMATLTVHPVDVLRTRFAAQGEPKVYNTLCHAVGTMYRSEGPQVFYKGLAPTLIAIFPYAGLQFSCYSSLKHLYKWAIPAEGKKNENLQNLLCGSGAGVISKTLTYPLDLFKKRLQVGGFEHARAAFGQVRRYKGLMDCAKQVLQKEGALGFFKGLSPSLLKAALSTGFMFFWYEFFCNVFHCMNRTASQR.

3 Solcar repeats span residues 13 to 106, 116 to 202, and 214 to 309; these read NTKF…LTEL, REFS…LKHL, and NENL…FCNV. A helical membrane pass occupies residues 19-39; the sequence is AVAGSVSGLVTRALISPFDVI. Phosphoserine is present on S51. 4 consecutive transmembrane segments (helical) span residues 87–107, 122–142, 173–193, and 220–240; these read ILSIGYGAVQFLSFEMLTELV, FVCGGLAACMATLTVHPVDVL, VFYKGLAPTLIAIFPYAGLQF, and LLCGSGAGVISKTLTYPLDLF. The Substrate recognition signature appears at 241–246; the sequence is KKRLQV. A helical membrane pass occupies residues 293-313; the sequence is ALSTGFMFFWYEFFCNVFHCM.

The protein belongs to the mitochondrial carrier (TC 2.A.29) family.

The protein resides in the mitochondrion membrane. The catalysed reaction is thiamine phosphate(out) + thiamine diphosphate(in) = thiamine phosphate(in) + thiamine diphosphate(out). In terms of biological role, mitochondrial transporter mediating uptake of thiamine diphosphate into mitochondria. It is not clear if the antiporter activity is affected by the membrane potential or by the proton electrochemical gradient. The polypeptide is Mitochondrial thiamine pyrophosphate carrier (SLC25A19) (Pongo abelii (Sumatran orangutan)).